Consider the following 318-residue polypeptide: Deoxyribose-phosphate aldolase (318 aa).

The Proton donor/acceptor role is filled by aspartate 155. The active-site Schiff-base intermediate with acetaldehyde is the lysine 218. Lysine 254 (proton donor/acceptor) is an active-site residue.

This sequence belongs to the DeoC/FbaB aldolase family. DeoC type 2 subfamily. As to quaternary structure, interacts with YBX1. In terms of tissue distribution, mainly expressed in liver, lung and colon.

The protein localises to the cytoplasm. It localises to the cytoplasmic granule. Its subcellular location is the nucleus. It carries out the reaction 2-deoxy-D-ribose 5-phosphate = D-glyceraldehyde 3-phosphate + acetaldehyde. Its pathway is carbohydrate degradation; 2-deoxy-D-ribose 1-phosphate degradation; D-glyceraldehyde 3-phosphate and acetaldehyde from 2-deoxy-alpha-D-ribose 1-phosphate: step 2/2. In terms of biological role, catalyzes a reversible aldol reaction between acetaldehyde and D-glyceraldehyde 3-phosphate to generate 2-deoxy-D-ribose 5-phosphate. Participates in stress granule (SG) assembly. May allow ATP production from extracellular deoxyinosine in conditions of energy deprivation. The sequence is that of Deoxyribose-phosphate aldolase (DERA) from Homo sapiens (Human).